The chain runs to 498 residues: MKNKERKLKSWQGWLIFSSSMVVVFCLGLLAASVTERRAEIQSIYANKKDKIAPFEARNEMYRGNYPREYETWTYTADTSFRSEFNGSQAIDVLEQRPNMVIFWAGYAFSRDYTSPRGHMHAIQDMQRTLRTGNPGIDGAGDMQPATCWVCKSPDVPRMMQAIGVDEFYKNKWSSLGSDIVNPIGCADCHDPETMDLHISRPALIEAFQRRGLDITKASHQEMRSLVCAQCHVEYYFKGEGKYLTFPWDKGMTMEDAERYYDEAEYYDYIHTLSRAPILKAQHPDFEISQHGIHAQRGVSCADCHMPYISEGGVKFSDHHITSPLAHMDRTCQTCHRESEEELRKNVYERQRKANEVRNQLENELAKAHLEAQFAWDKGATEKEMTPILKYIRQSQWRWDYGVASHGASFHAPQEITRILSNGLERAMQARIEIARVLARHGYTDEVPLPDVSTKEKAQKYIGLDMDGLHKNKEKFLETVVPKWVKKAKGKGLLIAAK.

The N-terminal stretch at 1–31 (MKNKERKLKSWQGWLIFSSSMVVVFCLGLLA) is a signal peptide. Residue H119 participates in heme c binding. Positions 148, 151, and 152 each coordinate heme. 6 residues coordinate heme c: C186, C189, H190, C228, C231, and H232. The Ca(2+) site is built by E234, Y235, K280, and Q282. A substrate-binding site is contributed by Y235. H283 serves as a coordination point for substrate. The heme c site is built by H294, C301, C304, H305, H319, C332, C335, H336, and H411.

Belongs to the cytochrome c-552 family. Ca(2+) is required as a cofactor. Heme c serves as cofactor.

It is found in the periplasm. The catalysed reaction is 6 Fe(III)-[cytochrome c] + NH4(+) + 2 H2O = 6 Fe(II)-[cytochrome c] + nitrite + 8 H(+). Its pathway is nitrogen metabolism; nitrate reduction (assimilation). Its function is as follows. Catalyzes the reduction of nitrite to ammonia, consuming six electrons in the process. This chain is Cytochrome c-552, found in Porphyromonas gingivalis (strain ATCC BAA-308 / W83).